Here is a 324-residue protein sequence, read N- to C-terminus: UDP-N-acetylenolpyruvoylglucosamine reductase (324 aa).

An FAD-binding PCMH-type domain is found at 36–203; it reads FRAGGLAELM…THAIFEGYAE (168 aa). Arginine 183 is an active-site residue. Catalysis depends on serine 232, which acts as the Proton donor. The active site involves glutamate 302.

This sequence belongs to the MurB family. It depends on FAD as a cofactor.

It localises to the cytoplasm. It carries out the reaction UDP-N-acetyl-alpha-D-muramate + NADP(+) = UDP-N-acetyl-3-O-(1-carboxyvinyl)-alpha-D-glucosamine + NADPH + H(+). It functions in the pathway cell wall biogenesis; peptidoglycan biosynthesis. In terms of biological role, cell wall formation. This Rhizobium meliloti (strain 1021) (Ensifer meliloti) protein is UDP-N-acetylenolpyruvoylglucosamine reductase.